The following is a 108-amino-acid chain: MSDTEYLARAEAVLAAVERTVDVANDGDHDIDLERNGSVLTLTFENGSKIIVNLQPPMKEVWIAAKAGGFHYRFIDGEWRDTRTGTEFFSALTDYATQQAGLPITFSA.

The protein belongs to the frataxin family.

Involved in iron-sulfur (Fe-S) cluster assembly. May act as a regulator of Fe-S biogenesis. The protein is Iron-sulfur cluster assembly protein CyaY of Burkholderia cenocepacia (strain ATCC BAA-245 / DSM 16553 / LMG 16656 / NCTC 13227 / J2315 / CF5610) (Burkholderia cepacia (strain J2315)).